Consider the following 321-residue polypeptide: Probable transaldolase (321 aa).

The Schiff-base intermediate with substrate role is filled by lysine 133.

This sequence belongs to the transaldolase family. Type 1 subfamily. Homodimer.

The protein resides in the cytoplasm. It catalyses the reaction D-sedoheptulose 7-phosphate + D-glyceraldehyde 3-phosphate = D-erythrose 4-phosphate + beta-D-fructose 6-phosphate. It participates in carbohydrate degradation; pentose phosphate pathway; D-glyceraldehyde 3-phosphate and beta-D-fructose 6-phosphate from D-ribose 5-phosphate and D-xylulose 5-phosphate (non-oxidative stage): step 2/3. Transaldolase is important for the balance of metabolites in the pentose-phosphate pathway. The polypeptide is Probable transaldolase (tal) (Dictyostelium discoideum (Social amoeba)).